We begin with the raw amino-acid sequence, 372 residues long: tRNA-specific 2-thiouridylase MnmA (372 aa).

Residues 9–16 (GLSGGVDS) and M35 each bind ATP. An interaction with target base in tRNA region spans residues 95–97 (NPD). The active-site Nucleophile is the C100. A disulfide bridge connects residues C100 and C198. G124 contributes to the ATP binding site. Residues 148-150 (KDQ) are interaction with tRNA. C198 acts as the Cysteine persulfide intermediate in catalysis. Residues 317 to 318 (RY) form an interaction with tRNA region.

Belongs to the MnmA/TRMU family.

It localises to the cytoplasm. The catalysed reaction is S-sulfanyl-L-cysteinyl-[protein] + uridine(34) in tRNA + AH2 + ATP = 2-thiouridine(34) in tRNA + L-cysteinyl-[protein] + A + AMP + diphosphate + H(+). Catalyzes the 2-thiolation of uridine at the wobble position (U34) of tRNA, leading to the formation of s(2)U34. In Delftia acidovorans (strain DSM 14801 / SPH-1), this protein is tRNA-specific 2-thiouridylase MnmA.